The chain runs to 687 residues: Macrolide export ATP-binding/permease protein MacB (687 aa).

Residues 6-244 (LKLAAVTRRF…LAEAGVDAAE (239 aa)) enclose the ABC transporter domain. 42–49 (GASGSGKS) contacts ATP. The segment covering 246 to 256 (AEASEAAVGES) has biased composition (low complexity). Positions 246-281 (AEASEAAVGESPTRNRHDTPAPPAAVDTDPHVDTGT) are disordered. 4 consecutive transmembrane segments (helical) span residues 312 to 332 (LLTMLGIIIGITSVVSIVAIG), 560 to 580 (LTLLLSLIAVISLVVGGIGVM), 617 to 637 (LVCLLGGTIGIALSFGLGALF), and 650 to 670 (AGAIVTAFVCSTLTGVIFGFM).

This sequence belongs to the ABC transporter superfamily. Macrolide exporter (TC 3.A.1.122) family. In terms of assembly, homodimer.

It localises to the cell inner membrane. Functionally, non-canonical ABC transporter that contains transmembrane domains (TMD), which form a pore in the inner membrane, and an ATP-binding domain (NBD), which is responsible for energy generation. Confers resistance against macrolides. The chain is Macrolide export ATP-binding/permease protein MacB from Burkholderia lata (strain ATCC 17760 / DSM 23089 / LMG 22485 / NCIMB 9086 / R18194 / 383).